A 132-amino-acid chain; its full sequence is Small ribosomal subunit protein uS8 (132 aa).

This sequence belongs to the universal ribosomal protein uS8 family. Part of the 30S ribosomal subunit. Contacts proteins S5 and S12.

Functionally, one of the primary rRNA binding proteins, it binds directly to 16S rRNA central domain where it helps coordinate assembly of the platform of the 30S subunit. In Geobacter metallireducens (strain ATCC 53774 / DSM 7210 / GS-15), this protein is Small ribosomal subunit protein uS8.